Here is a 186-residue protein sequence, read N- to C-terminus: Lipoprotein signal peptidase (186 aa).

Helical transmembrane passes span 8–28 (FFSVFKPGYLAFVAFGLFLDL), 44–64 (IPVLGDFFRLSLTFNTGFVFG), 66–86 (FQDNALPSLFATGFAIVFLIF), and 97–117 (AWGWNFVMAGAFGNFLDKFFV). Residues Asp142 and Asp164 contribute to the active site. Residues 157 to 177 (WPAFNVADSCVSIGIVILLFT) traverse the membrane as a helical segment.

The protein belongs to the peptidase A8 family.

The protein localises to the cell inner membrane. The catalysed reaction is Release of signal peptides from bacterial membrane prolipoproteins. Hydrolyzes -Xaa-Yaa-Zaa-|-(S,diacylglyceryl)Cys-, in which Xaa is hydrophobic (preferably Leu), and Yaa (Ala or Ser) and Zaa (Gly or Ala) have small, neutral side chains.. It participates in protein modification; lipoprotein biosynthesis (signal peptide cleavage). Its function is as follows. This protein specifically catalyzes the removal of signal peptides from prolipoproteins. The protein is Lipoprotein signal peptidase of Leptospira biflexa serovar Patoc (strain Patoc 1 / ATCC 23582 / Paris).